Consider the following 218-residue polypeptide: Sodium channel regulatory subunit beta-1 (218 aa).

The signal sequence occupies residues 1–18 (MGTLLALVVGAVLVSSAW). The Extracellular portion of the chain corresponds to 19–157 (GGCVEVDSET…DKANRDMASI (139 aa)). Intrachain disulfides connect Cys21/Cys43 and Cys40/Cys121. An Ig-like C2-type domain is found at 22–150 (VEVDSETEAV…KIHLEVVDKA (129 aa)). N-linked (GlcNAc...) asparagine glycans are attached at residues Asn93, Asn110, Asn114, and Asn135. Residues 158–179 (VSEIMMYVLIVVLTIWLVAEMV) traverse the membrane as a helical segment. At 180–218 (YCYKKIAAATEAAAQENASEYLAITSESKENCTGVQVAE) the chain is on the cytoplasmic side.

It belongs to the sodium channel auxiliary subunit SCN1B (TC 8.A.17) family. A voltage-gated sodium (Nav) channel consists of an ion-conducting pore-forming alpha subunit functional on its own that is regulated by one or more beta subunits. Interacts with SCN1A; regulatory subunit of SCN1A/Nav1.1. Interacts with SCN3A; regulatory subunit of SCN3A/Nav1.3. Interacts with SCN4A; regulatory subunit of SCN4A/Nav1.4. Interacts with SCN5A; regulatory subunit of SCN5A/Nav1.5. Interacts with SCN8A; regulatory subunit of SCN8A/Nav1.6. Interacts with SCN9A; regulatory subunit of SCN9A/Nav1.7. Interacts with SCN10A; regulatory subunit of SCN10A/Nav1.8. Interacts with NFASC. Interacts with TMEM65. As to expression, detected in brain (at protein level). Expressed in brain, heart, skeletal muscle and spinal cord.

The protein localises to the cell membrane. It is found in the perikaryon. The protein resides in the cell projection. It localises to the axon. Its function is as follows. Regulatory subunit of multiple voltage-gated sodium (Nav) channels directly mediating the depolarization of excitable membranes. Navs, also called VGSCs (voltage-gated sodium channels) or VDSCs (voltage-dependent sodium channels), operate by switching between closed and open conformations depending on the voltage difference across the membrane. In the open conformation they allow Na(+) ions to selectively pass through the pore, along their electrochemical gradient. The influx of Na+ ions provokes membrane depolarization, initiating the propagation of electrical signals throughout cells and tissues. The accessory beta subunits participate in localization and functional modulation of the Nav channels. Modulates the activity of SCN1A/Nav1.1, SCN2A/Nav1.2, SCN3A/Nav1.3, SCN4A/Nav1.4, SCN5A/Nav1.5, SCN8A/Nav1.6, SCN9A/Nav1.7 and SCN10A/Nav1.8. This chain is Sodium channel regulatory subunit beta-1, found in Rattus norvegicus (Rat).